The primary structure comprises 1334 residues: Nck-associated protein 5-like (1334 aa).

5 disordered regions span residues 1–28 (MSEAMDQPAGGPGNPRPGEGDDGSMEPG), 115–146 (LPQIPLTPLQPPSEPPASPSLSSTEGPAAPLP), 210–234 (TPWRPPGQGPGSPEPINGELCGPPQ), 266–316 (GEED…SPDT), and 349–711 (PLNG…MVPS). A mediates interaction with CDK5RAP2 and is required for homodimerization and microtubule bundle formation region spans residues 1-139 (MSEAMDQPAG…PASPSLSSTE (139 aa)). Residues 28 to 106 (GTCQELLHRL…NQMLSALFQQ (79 aa)) adopt a coiled-coil conformation. Pro residues predominate over residues 122-132 (PLQPPSEPPAS). Residues 358–372 (GQSSSPDQAPPQLSK) show a composition bias toward polar residues. Phosphoserine; by CDK1 occurs at positions 440, 451, 470, and 477. Residues 468 to 481 (SPSPGGPQLSPQLP) are compositionally biased toward low complexity. A (S/T)X(I/L)P motif 1 motif is present at residues 484–487 (SRIP). 3 positions are modified to phosphoserine: serine 493, serine 496, and serine 498. The span at 519–547 (LPTSPSPCYTTPDSTQLRPPQSALSTTLS) shows a compositional bias: polar residues. A phosphoserine; by CDK1 mark is found at serine 571 and serine 577. The segment covering 638–649 (PGNSSKKPSQGS) has biased composition (polar residues). Threonine 659 carries the phosphothreonine modification. The interval 750–1146 (RVYSSHSMGA…SGTPSKNLPK (397 aa)) is mediates interaction with beta-tubulin and is required for microtubule bundle formation. At serine 767 the chain carries Phosphoserine; by CDK1. The segment at 782–884 (LAGALCPQVP…EGLAPHSAIE (103 aa)) is disordered. The span at 810-825 (SPHSSPTKLPSKSPTK) shows a compositional bias: low complexity. Residues 816–819 (TKLP) carry the (S/T)X(I/L)P motif 2 motif. The (S/T)X(I/L)P motif 3; required for interaction with MAPRE1 motif lies at 926–929 (SKLP). Disordered regions lie at residues 931 to 953 (LNRRTEATKNKEGAGGGSPLRRE), 986 to 1015 (KAYLSSRARPRPGGPAPGPNTGLGQVQGQL), and 1030 to 1183 (LNRV…VPGI). A compositionally biased stretch (basic and acidic residues) spans 933–942 (RRTEATKNKE). Residues 956–994 (MEARKLEAESLNISKLMAKAEDLRRALEEEKAYLSSRAR) are a coiled coil. Basic and acidic residues predominate over residues 1033–1050 (VDGKELPSKSWREPKPEY). Over residues 1079–1090 (GCGKPPGKPSSE) the composition is skewed to low complexity. Positions 1110 to 1122 (SHFTACGSLTRTL) are enriched in polar residues. Pro residues predominate over residues 1152-1167 (LDPPPGVPPARPPPLT). Position 1194 is a phosphoserine (serine 1194). Low complexity predominate over residues 1197–1206 (AFPALLPAAP). Residues 1197-1334 (AFPALLPAAP…DSLSSCGSQG (138 aa)) form a disordered region. Polar residues predominate over residues 1235–1247 (TFPNTRAAGSSSD). Residues 1313–1334 (LETSESLSDSLYDSLSSCGSQG) are compositionally biased toward low complexity.

As to quaternary structure, homodimer. Interacts with CDK5RAP2. Interacts with MAPRE1. Interacts with beta-tubulin. CDK1/Cyclin B-dependent phosphorylation mediates its dissociation from centrosomes during mitosis.

Its subcellular location is the cytoplasm. The protein localises to the cytoskeleton. It is found in the microtubule organizing center. It localises to the centrosome. In terms of biological role, regulates microtubule organization and stabilization. Promotes microtubule growth and bundling formation and stabilizes microtubules by increasing intense acetylation of microtubules. Both tubulin-binding and homodimer formation are required for NCKAP5L-mediated microtubule bundle formation. This is Nck-associated protein 5-like from Homo sapiens (Human).